Reading from the N-terminus, the 60-residue chain is Large ribosomal subunit protein bL33 (60 aa).

The protein belongs to the bacterial ribosomal protein bL33 family.

This is Large ribosomal subunit protein bL33 from Christiangramia forsetii (strain DSM 17595 / CGMCC 1.15422 / KT0803) (Gramella forsetii).